A 289-amino-acid polypeptide reads, in one-letter code: Phospholipase A1 (289 aa).

The first 20 residues, 1 to 20 (MRTGPGWLLAAAALPFFACA), serve as a signal peptide directing secretion. Residues 21–52 (QEATIDKVHDTPAVRGSIIANMLQEHDNPFTL) lie on the Periplasmic side of the membrane. The beta stranded transmembrane segment at 53–65 (YPYESNYLLYTYT) threads the bilayer. Topologically, residues 66–84 (SDLNKKAIESYNWSDNANK) are extracellular. A beta stranded transmembrane segment spans residues 85–99 (DEVKFQLSLAFPLWR). Over 100-105 (GILGDN) the chain is Periplasmic. A beta stranded transmembrane segment spans residues 106-118 (SLLGASYTQRSWW). The Extracellular segment spans residues 119–128 (QLSNTGESAP). Ser-126 lines the Ca(2+) pocket. Residues 129-148 (FRETNYEPQLFLGFATDYSV) traverse the membrane as a beta stranded segment. The Periplasmic portion of the chain corresponds to 149–150 (GD). A beta stranded membrane pass occupies residues 151–164 (WTLRDAEFGYNHQS). His-162 (proton acceptor) is an active-site residue. The active-site Nucleophile is the Ser-164. Over 165 to 173 (NGRSDPTSR) the chain is Extracellular. The Ca(2+) site is built by Arg-167 and Ser-172. Residues 174–186 (SWNRLYSRLMAQN) form a beta stranded membrane-spanning segment. Topologically, residues 187–188 (GN) are periplasmic. Residues 189-198 (WLVEVKPWYV) traverse the membrane as a beta stranded segment. Residues 199 to 216 (IGDTSDNKNITKYMGYYQ) lie on the Extracellular side of the membrane. Ca(2+) is bound at residue Asp-204. The beta stranded transmembrane segment at 217-223 (LKIGYQL) threads the bilayer. Topologically, residues 224–225 (GE) are periplasmic. Residues 226–234 (AVLSAKGQY) traverse the membrane as a beta stranded segment. Residues 235-241 (NWNTGYG) are Extracellular-facing. The chain crosses the membrane as a beta stranded span at residues 242–250 (GAELGVSYP). Topologically, residues 251–255 (ITKHV) are periplasmic. Residues 256-265 (RFYTQVYSGY) traverse the membrane as a beta stranded segment. Residues 266–274 (GESLIDYDF) are Extracellular-facing. Residues 275-286 (NQTRVGMGVMLN) form a beta stranded membrane-spanning segment. Residues 287-289 (DLF) lie on the Periplasmic side of the membrane.

It belongs to the phospholipase A1 family. As to quaternary structure, homodimer; dimerization is reversible, and the dimeric form is the active one. Ca(2+) serves as cofactor.

The protein resides in the cell outer membrane. It carries out the reaction a 1,2-diacyl-sn-glycero-3-phosphocholine + H2O = a 2-acyl-sn-glycero-3-phosphocholine + a fatty acid + H(+). The catalysed reaction is a 1,2-diacyl-sn-glycero-3-phosphocholine + H2O = a 1-acyl-sn-glycero-3-phosphocholine + a fatty acid + H(+). In terms of biological role, hydrolysis of phosphatidylcholine with phospholipase A2 (EC 3.1.1.4) and phospholipase A1 (EC 3.1.1.32) activities. This chain is Phospholipase A1 (pldA), found in Proteus vulgaris.